Consider the following 714-residue polypeptide: Calpain-1 catalytic subunit (714 aa).

In terms of domain architecture, Calpain catalytic spans 55-354 (LFRDEAFPPV…FTRLEICNLT (300 aa)). Residues glutamine 109 and aspartate 114 each coordinate Ca(2+). Catalysis depends on residues cysteine 115, histidine 272, and asparagine 296. 3 residues coordinate Ca(2+): serine 316, aspartate 318, and glutamate 323. Residue threonine 354 is modified to Phosphothreonine. The segment at 355–526 (PDALKSRTIR…KSAGTAELDD (172 aa)) is domain III. The interval 527–542 (QIQANLPDEQVLSEEE) is linker. EF-hand domains lie at 541-576 (EEID…IISK), 585-618 (FSLE…NRIR), 615-650 (NRIR…AGFK), and 680-714 (VRLE…TMFA). The tract at residues 543-713 (IDENFKALFR…LFKWLQLTMF (171 aa)) is domain IV. 10 residues coordinate Ca(2+): aspartate 598, aspartate 600, asparagine 602, lysine 604, glutamate 609, aspartate 628, aspartate 630, serine 632, serine 634, and glutamate 639.

Belongs to the peptidase C2 family. Forms a heterodimer with a small (regulatory) subunit (CAPNS1). Requires Ca(2+) as cofactor. Post-translationally, undergoes calcium-induced successive autoproteolytic cleavages that generate a membrane-bound 78 kDa active form and an intracellular 75 kDa active form. Calpastatin reduces with high efficiency the transition from 78 kDa to 75 kDa calpain forms. In terms of tissue distribution, ubiquitous.

The protein localises to the cytoplasm. It localises to the cell membrane. The catalysed reaction is Broad endopeptidase specificity.. Its activity is regulated as follows. Activated by micromolar concentrations of calcium and inhibited by calpastatin. Functionally, calcium-regulated non-lysosomal thiol-protease which catalyze limited proteolysis of substrates involved in cytoskeletal remodeling and signal transduction. Proteolytically cleaves CTBP1. Cleaves and activates caspase-7 (CASP7). This chain is Calpain-1 catalytic subunit (CAPN1), found in Macaca fascicularis (Crab-eating macaque).